Reading from the N-terminus, the 126-residue chain is MNRASTRKIRAVAKHVRMSSNKARRVAHQLRGCTYMEALSILNWMPHRACYPILKVLRSAAANAYHNMGIDKGFLFVLMAEVNEGPIFKRFRPRARGRGYPIQKPTCHISITLEDVTDSNSIMVKK.

It belongs to the universal ribosomal protein uL22 family. Part of the 50S ribosomal subunit.

It is found in the plastid. Its subcellular location is the chloroplast. In terms of biological role, this protein binds specifically to 23S rRNA. Its function is as follows. The globular domain of the protein is located near the polypeptide exit tunnel on the outside of the subunit, while an extended beta-hairpin is found that lines the wall of the exit tunnel in the center of the 70S ribosome. In Cryptomeria japonica (Japanese cedar), this protein is Large ribosomal subunit protein uL22c (rpl22).